We begin with the raw amino-acid sequence, 192 residues long: MFKFDNLILASSSKQRLCLLNQLGVLPGEIVIPNIDESPLKKELPKIYSMRVAKEKVIKVSLLYPKKFILGADTVVCCGRKILPKAETEDQAFEILELISGRRHRVYTSVYLYAPSKKLHYRSVMTVVKIKRLSVKEINSYILSGEWKGKAGACNIQGNAGKFVISINGSYSSVIGLPLYETYSILSQYFPI.

Catalysis depends on aspartate 73, which acts as the Proton acceptor.

This sequence belongs to the Maf family. It depends on a divalent metal cation as a cofactor.

It localises to the cytoplasm. The catalysed reaction is a ribonucleoside 5'-triphosphate + H2O = a ribonucleoside 5'-phosphate + diphosphate + H(+). It carries out the reaction a 2'-deoxyribonucleoside 5'-triphosphate + H2O = a 2'-deoxyribonucleoside 5'-phosphate + diphosphate + H(+). Functionally, nucleoside triphosphate pyrophosphatase. May have a dual role in cell division arrest and in preventing the incorporation of modified nucleotides into cellular nucleic acids. This Ehrlichia ruminantium (strain Welgevonden) protein is Nucleoside triphosphate pyrophosphatase.